A 336-amino-acid polypeptide reads, in one-letter code: Atypical chemokine receptor 1 (336 aa).

The tract at residues methionine 1–tyrosine 30 is mediates Plasmodium vivax Duffy receptor (PVDR) binding. Topologically, residues methionine 1–proline 63 are extracellular. Asparagine 16 carries N-linked (GlcNAc...) asparagine glycosylation. The residue at position 30 (tyrosine 30) is a Sulfotyrosine. N-linked (GlcNAc...) asparagine glycosylation occurs at asparagine 33. Tyrosine 41 carries the post-translational modification Sulfotyrosine. Intrachain disulfides connect cysteine 51–cysteine 276 and cysteine 129–cysteine 195. The chain crosses the membrane as a helical span at residues phenylalanine 64 to phenylalanine 84. At arginine 85–glycine 95 the chain is on the cytoplasmic side. The helical transmembrane segment at tryptophan 96–leucine 116 threads the bilayer. The Extracellular segment spans residues alanine 117–cysteine 129. The chain crosses the membrane as a helical span at residues serine 130–leucine 153. Residues glycine 154 to threonine 166 lie on the Cytoplasmic side of the membrane. A helical transmembrane segment spans residues leucine 167–alanine 187. Residues serine 188–glutamine 207 lie on the Extracellular side of the membrane. A helical transmembrane segment spans residues alanine 208–alanine 228. The Cytoplasmic portion of the chain corresponds to lysine 229–asparagine 244. Residues isoleucine 245–leucine 265 form a helical membrane-spanning segment. Residues valine 266–asparagine 287 lie on the Extracellular side of the membrane. The helical transmembrane segment at leucine 288 to cysteine 308 threads the bilayer. Residues histidine 309 to serine 336 lie on the Cytoplasmic side of the membrane.

This sequence belongs to the G-protein coupled receptor 1 family. Atypical chemokine receptor subfamily. As to quaternary structure, (Microbial infection) Interacts (via N-terminal extracellular domain) with Plasmodium vivax Duffy receptor (PVDR) (via PvRII region). In terms of assembly, (Microbial infection) Interacts (via N-terminal extracellular domain) with Plasmodium knowlesi Duffy receptor alpha form (DBPalpha) (via region II). Sulfation at Tyr-41 facilitates interaction with MGSA/CXCL1, RANTES/CCL5 and MCP-1/CCL2 but not IL8/CXCL8. Sulfation at Tyr-30 facilitates interaction with IL8/CXCL8. In terms of processing, (Microbial infection) Sulfation at Tyr-41 facilitates interaction with Plasmodium vivax Duffy receptor (PVDR). Sulfation at Tyr-30/Tyr-41 and Tyr-41 alone increases binding affinity of Plasmodium vivax parasites and likely promotes invasion of red blood cells. Post-translationally, (Microbial infection) Sulfation at Tyr-41 facilitates interaction with Plasmodium knowlesi Duffy receptor alpha form (DBPalpha). Sulfation at Tyr-30/Tyr-41 and Tyr-41 alone increases binding affinity of Plasmodium knowlesi parasites and likely promotes invasion of red blood cells. As to expression, found in adult kidney, adult spleen, bone marrow and fetal liver. In particular, it is expressed along postcapillary venules throughout the body, except in the adult liver. Erythroid cells and postcapillary venule endothelium are the principle tissues expressing duffy. Fy(-A-B) individuals do not express duffy in the bone marrow, however they do, in postcapillary venule endothelium.

The protein resides in the early endosome. It localises to the recycling endosome. Its subcellular location is the membrane. Its function is as follows. Atypical chemokine receptor that controls chemokine levels and localization via high-affinity chemokine binding that is uncoupled from classic ligand-driven signal transduction cascades, resulting instead in chemokine sequestration, degradation, or transcytosis. Also known as interceptor (internalizing receptor) or chemokine-scavenging receptor or chemokine decoy receptor. Has a promiscuous chemokine-binding profile, interacting with inflammatory chemokines of both the CXC and the CC subfamilies but not with homeostatic chemokines. Acts as a receptor for chemokines including CCL2, CCL5, CCL7, CCL11, CCL13, CCL14, CCL17, CXCL5, CXCL6, IL8/CXCL8, CXCL11, GRO, RANTES, MCP-1 and TARC. May regulate chemokine bioavailability and, consequently, leukocyte recruitment through two distinct mechanisms: when expressed in endothelial cells, it sustains the abluminal to luminal transcytosis of tissue-derived chemokines and their subsequent presentation to circulating leukocytes; when expressed in erythrocytes, serves as blood reservoir of cognate chemokines but also as a chemokine sink, buffering potential surges in plasma chemokine levels. (Microbial infection) Acts as a receptor for the malaria parasite Plasmodium vivax. Functionally, (Microbial infection) Acts as a receptor for the malaria parasite Plasmodium knowlesi. This chain is Atypical chemokine receptor 1 (ACKR1), found in Homo sapiens (Human).